A 305-amino-acid polypeptide reads, in one-letter code: UDP-3-O-acyl-N-acetylglucosamine deacetylase (305 aa).

Zn(2+) is bound by residues His79, His238, and Asp242. His265 acts as the Proton donor in catalysis.

The protein belongs to the LpxC family. The cofactor is Zn(2+).

It carries out the reaction a UDP-3-O-[(3R)-3-hydroxyacyl]-N-acetyl-alpha-D-glucosamine + H2O = a UDP-3-O-[(3R)-3-hydroxyacyl]-alpha-D-glucosamine + acetate. It functions in the pathway glycolipid biosynthesis; lipid IV(A) biosynthesis; lipid IV(A) from (3R)-3-hydroxytetradecanoyl-[acyl-carrier-protein] and UDP-N-acetyl-alpha-D-glucosamine: step 2/6. Functionally, catalyzes the hydrolysis of UDP-3-O-myristoyl-N-acetylglucosamine to form UDP-3-O-myristoylglucosamine and acetate, the committed step in lipid A biosynthesis. This is UDP-3-O-acyl-N-acetylglucosamine deacetylase from Vibrio vulnificus (strain CMCP6).